Consider the following 285-residue polypeptide: 3-methyl-2-oxobutanoate hydroxymethyltransferase 1 (285 aa).

Residues D49 and D88 each coordinate Mg(2+). 3-methyl-2-oxobutanoate-binding positions include 49 to 50, D88, and K118; that span reads DS. A Mg(2+)-binding site is contributed by E120. The active-site Proton acceptor is the E187.

The protein belongs to the PanB family. Homodecamer; pentamer of dimers. The cofactor is Mg(2+).

The protein localises to the cytoplasm. The enzyme catalyses 3-methyl-2-oxobutanoate + (6R)-5,10-methylene-5,6,7,8-tetrahydrofolate + H2O = 2-dehydropantoate + (6S)-5,6,7,8-tetrahydrofolate. It participates in cofactor biosynthesis; (R)-pantothenate biosynthesis; (R)-pantoate from 3-methyl-2-oxobutanoate: step 1/2. Catalyzes the reversible reaction in which hydroxymethyl group from 5,10-methylenetetrahydrofolate is transferred onto alpha-ketoisovalerate to form ketopantoate. In Burkholderia lata (strain ATCC 17760 / DSM 23089 / LMG 22485 / NCIMB 9086 / R18194 / 383), this protein is 3-methyl-2-oxobutanoate hydroxymethyltransferase 1.